Reading from the N-terminus, the 565-residue chain is Proline--tRNA ligase (565 aa).

Belongs to the class-II aminoacyl-tRNA synthetase family. ProS type 1 subfamily. In terms of assembly, homodimer.

It localises to the cytoplasm. The catalysed reaction is tRNA(Pro) + L-proline + ATP = L-prolyl-tRNA(Pro) + AMP + diphosphate. Catalyzes the attachment of proline to tRNA(Pro) in a two-step reaction: proline is first activated by ATP to form Pro-AMP and then transferred to the acceptor end of tRNA(Pro). As ProRS can inadvertently accommodate and process non-cognate amino acids such as alanine and cysteine, to avoid such errors it has two additional distinct editing activities against alanine. One activity is designated as 'pretransfer' editing and involves the tRNA(Pro)-independent hydrolysis of activated Ala-AMP. The other activity is designated 'posttransfer' editing and involves deacylation of mischarged Ala-tRNA(Pro). The misacylated Cys-tRNA(Pro) is not edited by ProRS. This Lactobacillus delbrueckii subsp. bulgaricus (strain ATCC BAA-365 / Lb-18) protein is Proline--tRNA ligase.